The sequence spans 423 residues: Anthranilate 1,2-dioxygenase large subunit (423 aa).

In terms of domain architecture, Rieske spans 53-168 (WNFVALEAEI…VDSYRGLVFA (116 aa)). [2Fe-2S] cluster-binding residues include C95, H97, C115, and H118. Positions 223, 228, and 370 each coordinate Fe cation.

It belongs to the bacterial ring-hydroxylating dioxygenase alpha subunit family. In terms of assembly, part of a multicomponent enzyme system composed of a reductase (AndAa), a ferredoxin (AndAb) and a two-subunit oxygenase component (AndAc and AndAd). Fe cation serves as cofactor. Requires [2Fe-2S] cluster as cofactor.

The catalysed reaction is anthranilate + NADH + O2 + 3 H(+) = catechol + NH4(+) + CO2 + NAD(+). It carries out the reaction anthranilate + NADPH + O2 + 3 H(+) = catechol + NH4(+) + CO2 + NADP(+). The protein operates within aromatic compound metabolism; anthranilate degradation via hydroxylation; catechol from anthranilate: step 1/1. In terms of biological role, oxygenase component of anthranilate dioxygenase multicomponent enzyme system which catalyzes the incorporation of both atoms of molecular oxygen into anthranilate to form catechol. Can also act on benzoate and salicylate but not on 2-chlorobenzoate or o-toluate. The polypeptide is Anthranilate 1,2-dioxygenase large subunit (Burkholderia cepacia (Pseudomonas cepacia)).